Reading from the N-terminus, the 279-residue chain is Large ribosomal subunit protein uL2 (279 aa).

The tract at residues 218-279 is disordered; sequence RPQTRGSAMN…ITRRKSNPKR (62 aa). Over residues 255–279 the composition is skewed to basic residues; it reads KGSKTRRKKASDKLIITRRKSNPKR.

Belongs to the universal ribosomal protein uL2 family. As to quaternary structure, part of the 50S ribosomal subunit. Forms a bridge to the 30S subunit in the 70S ribosome.

In terms of biological role, one of the primary rRNA binding proteins. Required for association of the 30S and 50S subunits to form the 70S ribosome, for tRNA binding and peptide bond formation. It has been suggested to have peptidyltransferase activity; this is somewhat controversial. Makes several contacts with the 16S rRNA in the 70S ribosome. This Sulfurimonas denitrificans (strain ATCC 33889 / DSM 1251) (Thiomicrospira denitrificans (strain ATCC 33889 / DSM 1251)) protein is Large ribosomal subunit protein uL2.